A 445-amino-acid polypeptide reads, in one-letter code: Phosphoglucosamine mutase (445 aa).

Residue Ser-102 is the Phosphoserine intermediate of the active site. Positions 102, 241, 243, and 245 each coordinate Mg(2+). Ser-102 carries the post-translational modification Phosphoserine.

It belongs to the phosphohexose mutase family. Mg(2+) is required as a cofactor. Activated by phosphorylation.

The catalysed reaction is alpha-D-glucosamine 1-phosphate = D-glucosamine 6-phosphate. Functionally, catalyzes the conversion of glucosamine-6-phosphate to glucosamine-1-phosphate. This chain is Phosphoglucosamine mutase, found in Escherichia coli O127:H6 (strain E2348/69 / EPEC).